A 431-amino-acid chain; its full sequence is Enolase (431 aa).

Glutamine 163 serves as a coordination point for (2R)-2-phosphoglycerate. The active-site Proton donor is the glutamate 205. Aspartate 242, glutamate 288, and aspartate 315 together coordinate Mg(2+). Positions 340, 369, 370, and 391 each coordinate (2R)-2-phosphoglycerate. Lysine 340 functions as the Proton acceptor in the catalytic mechanism.

This sequence belongs to the enolase family. It depends on Mg(2+) as a cofactor.

It localises to the cytoplasm. It is found in the secreted. The protein localises to the cell surface. The catalysed reaction is (2R)-2-phosphoglycerate = phosphoenolpyruvate + H2O. Its pathway is carbohydrate degradation; glycolysis; pyruvate from D-glyceraldehyde 3-phosphate: step 4/5. Its function is as follows. Catalyzes the reversible conversion of 2-phosphoglycerate (2-PG) into phosphoenolpyruvate (PEP). It is essential for the degradation of carbohydrates via glycolysis. The chain is Enolase from Bacillus cereus (strain AH187).